Consider the following 435-residue polypeptide: tRNA modification GTPase MnmE (435 aa).

The (6S)-5-formyl-5,6,7,8-tetrahydrofolate site is built by Arg-20, Glu-77, and Lys-117. A TrmE-type G domain is found at Gly-214–His-359. GTP is bound by residues Asn-224–Ser-229, Thr-243–Thr-249, and Asp-268–Gly-271. The Mg(2+) site is built by Ser-228 and Thr-249. Lys-435 is a binding site for (6S)-5-formyl-5,6,7,8-tetrahydrofolate.

It belongs to the TRAFAC class TrmE-Era-EngA-EngB-Septin-like GTPase superfamily. TrmE GTPase family. Homodimer. Heterotetramer of two MnmE and two MnmG subunits. K(+) is required as a cofactor.

The protein localises to the cytoplasm. Functionally, exhibits a very high intrinsic GTPase hydrolysis rate. Involved in the addition of a carboxymethylaminomethyl (cmnm) group at the wobble position (U34) of certain tRNAs, forming tRNA-cmnm(5)s(2)U34. The polypeptide is tRNA modification GTPase MnmE (Bartonella tribocorum (strain CIP 105476 / IBS 506)).